The following is a 219-amino-acid chain: N-(5'-phosphoribosyl)anthranilate isomerase (219 aa).

Belongs to the TrpF family.

It carries out the reaction N-(5-phospho-beta-D-ribosyl)anthranilate = 1-(2-carboxyphenylamino)-1-deoxy-D-ribulose 5-phosphate. It participates in amino-acid biosynthesis; L-tryptophan biosynthesis; L-tryptophan from chorismate: step 3/5. In Chloroherpeton thalassium (strain ATCC 35110 / GB-78), this protein is N-(5'-phosphoribosyl)anthranilate isomerase.